We begin with the raw amino-acid sequence, 457 residues long: Bifunctional protein GlmU (457 aa).

The interval 1–230 (MSKRYAVVLA…FEESLGVNDR (230 aa)) is pyrophosphorylase. Residues 9–12 (LAAG), Lys-23, Gln-73, and 78–79 (GT) contribute to the UDP-N-acetyl-alpha-D-glucosamine site. A Mg(2+)-binding site is contributed by Asp-103. UDP-N-acetyl-alpha-D-glucosamine-binding residues include Gly-140, Glu-155, Asn-170, and Asn-228. A Mg(2+)-binding site is contributed by Asn-228. A linker region spans residues 231–251 (IALAEASKLMQRRINENHMRN). The interval 252-457 (GVTLVNPEST…GYAKHLNHSK (206 aa)) is N-acetyltransferase. UDP-N-acetyl-alpha-D-glucosamine is bound by residues Arg-333 and Lys-351. Catalysis depends on His-363, which acts as the Proton acceptor. UDP-N-acetyl-alpha-D-glucosamine-binding residues include Tyr-366 and Asn-377. Residues 386 to 387 (NY), Ala-423, and Arg-440 contribute to the acetyl-CoA site.

This sequence in the N-terminal section; belongs to the N-acetylglucosamine-1-phosphate uridyltransferase family. The protein in the C-terminal section; belongs to the transferase hexapeptide repeat family. In terms of assembly, homotrimer. It depends on Mg(2+) as a cofactor.

It localises to the cytoplasm. It carries out the reaction alpha-D-glucosamine 1-phosphate + acetyl-CoA = N-acetyl-alpha-D-glucosamine 1-phosphate + CoA + H(+). It catalyses the reaction N-acetyl-alpha-D-glucosamine 1-phosphate + UTP + H(+) = UDP-N-acetyl-alpha-D-glucosamine + diphosphate. Its pathway is nucleotide-sugar biosynthesis; UDP-N-acetyl-alpha-D-glucosamine biosynthesis; N-acetyl-alpha-D-glucosamine 1-phosphate from alpha-D-glucosamine 6-phosphate (route II): step 2/2. It participates in nucleotide-sugar biosynthesis; UDP-N-acetyl-alpha-D-glucosamine biosynthesis; UDP-N-acetyl-alpha-D-glucosamine from N-acetyl-alpha-D-glucosamine 1-phosphate: step 1/1. It functions in the pathway bacterial outer membrane biogenesis; LPS lipid A biosynthesis. Catalyzes the last two sequential reactions in the de novo biosynthetic pathway for UDP-N-acetylglucosamine (UDP-GlcNAc). The C-terminal domain catalyzes the transfer of acetyl group from acetyl coenzyme A to glucosamine-1-phosphate (GlcN-1-P) to produce N-acetylglucosamine-1-phosphate (GlcNAc-1-P), which is converted into UDP-GlcNAc by the transfer of uridine 5-monophosphate (from uridine 5-triphosphate), a reaction catalyzed by the N-terminal domain. The chain is Bifunctional protein GlmU from Listeria monocytogenes serovar 1/2a (strain ATCC BAA-679 / EGD-e).